Here is a 219-residue protein sequence, read N- to C-terminus: Probable GTP-binding protein EngB (219 aa).

The region spanning 31–205 (VGVEIAFAGR…LSILNEWCHP (175 aa)) is the EngB-type G domain. GTP contacts are provided by residues 39–46 (GRSNAGKS), 66–70 (GRTQL), 84–87 (DLPG), 151–154 (TKSD), and 184–186 (FSS). The Mg(2+) site is built by serine 46 and threonine 68.

It belongs to the TRAFAC class TrmE-Era-EngA-EngB-Septin-like GTPase superfamily. EngB GTPase family. Requires Mg(2+) as cofactor.

Necessary for normal cell division and for the maintenance of normal septation. The sequence is that of Probable GTP-binding protein EngB from Shewanella denitrificans (strain OS217 / ATCC BAA-1090 / DSM 15013).